A 436-amino-acid polypeptide reads, in one-letter code: GTPase Der (436 aa).

2 EngA-type G domains span residues 4 to 167 (PVIA…PKIE) and 176 to 351 (IRFS…ESHS). Residues 10-17 (GRPNVGKS), 57-61 (DTGGI), 119-122 (NKVD), 182-189 (GRPNVGKS), 229-233 (DTAGM), and 294-297 (NKWD) contribute to the GTP site. Residues 352 to 436 (IRIQTNVLND…PIHIIARARD (85 aa)) form the KH-like domain.

It belongs to the TRAFAC class TrmE-Era-EngA-EngB-Septin-like GTPase superfamily. EngA (Der) GTPase family. Associates with the 50S ribosomal subunit.

Its function is as follows. GTPase that plays an essential role in the late steps of ribosome biogenesis. The polypeptide is GTPase Der (Bacillus cereus (strain ATCC 10987 / NRS 248)).